A 501-amino-acid chain; its full sequence is MLKTSNLISSLLHNNLKNTSILRNKSIFYYSTNSNNNNNNNNNNNNNNNNNKNINLQNIKGTYDLFPNEQRIHKFIFDVGRGVAERYGFKEISTPIIEPFELFNRSVGESSDIVMKEMFKFKDYSNESSSPPSMICLRPEGTAGVIRAIINQSSTNHLTPAQRYYYQGPMFRYERPQRGRQRQFHQLGVELIGDQHPRSDVEIIDMAMNFIERLGINKSDTLLKINSLGDTDSIKVYNETLKRFYNDNVNKLSPISIKRLERGNSLRILDSKERQDIELNKLAPSIQDSLSIQCKDRFNNVLKGLDCLGISYEIDKSLVRGLDYYRHTIFEIQIIDNNQNNKGQRQQQQQQQGLAILGGGRYDGLANQLGYKYKEILPSIGWASGIERMVLFLDQSKIPNSIRPIGIAITDSSLSENAFKLCSNLRRNGWSSTLSTFNLEDENLSKQLKKFKNNPSFVIILAPSEYSNNTVIIKNMDDTTQSIIPLNEIDNFLENNKVLKN.

The disordered stretch occupies residues 32-54 (TNSNNNNNNNNNNNNNNNNNKNI). Over residues 33 to 54 (NSNNNNNNNNNNNNNNNNNKNI) the composition is skewed to low complexity.

It belongs to the class-II aminoacyl-tRNA synthetase family.

The protein resides in the mitochondrion matrix. It carries out the reaction tRNA(His) + L-histidine + ATP = L-histidyl-tRNA(His) + AMP + diphosphate + H(+). In Dictyostelium discoideum (Social amoeba), this protein is Probable histidine--tRNA ligase, mitochondrial (mhisS).